We begin with the raw amino-acid sequence, 443 residues long: ATP-dependent protease ATPase subunit HslU (443 aa).

Residues Ile18, 60–65, Asp256, Glu321, and Arg393 each bind ATP; that span reads GVGKTE.

It belongs to the ClpX chaperone family. HslU subfamily. A double ring-shaped homohexamer of HslV is capped on each side by a ring-shaped HslU homohexamer. The assembly of the HslU/HslV complex is dependent on binding of ATP.

It localises to the cytoplasm. Functionally, ATPase subunit of a proteasome-like degradation complex; this subunit has chaperone activity. The binding of ATP and its subsequent hydrolysis by HslU are essential for unfolding of protein substrates subsequently hydrolyzed by HslV. HslU recognizes the N-terminal part of its protein substrates and unfolds these before they are guided to HslV for hydrolysis. In Photorhabdus laumondii subsp. laumondii (strain DSM 15139 / CIP 105565 / TT01) (Photorhabdus luminescens subsp. laumondii), this protein is ATP-dependent protease ATPase subunit HslU.